Here is a 715-residue protein sequence, read N- to C-terminus: Polyribonucleotide nucleotidyltransferase (715 aa).

Mg(2+) is bound by residues Asp493 and Asp499. The 60-residue stretch at 560 to 619 folds into the KH domain; sequence PRMITIKINPEKIRDVIGKGGSVIRALTEETGTTIDISDDGVVTIASTNSDGMAEAKKRI. Residues 629-697 form the S1 motif domain; the sequence is GQVYEGTVLK…EKGRVRLSAK (69 aa).

This sequence belongs to the polyribonucleotide nucleotidyltransferase family. Requires Mg(2+) as cofactor.

Its subcellular location is the cytoplasm. It catalyses the reaction RNA(n+1) + phosphate = RNA(n) + a ribonucleoside 5'-diphosphate. Its function is as follows. Involved in mRNA degradation. Catalyzes the phosphorolysis of single-stranded polyribonucleotides processively in the 3'- to 5'-direction. This is Polyribonucleotide nucleotidyltransferase from Burkholderia lata (strain ATCC 17760 / DSM 23089 / LMG 22485 / NCIMB 9086 / R18194 / 383).